We begin with the raw amino-acid sequence, 438 residues long: uncharacterized protein (438 aa).

Lys-273 is modified (N6-(pyridoxal phosphate)lysine).

It belongs to the class-III pyridoxal-phosphate-dependent aminotransferase family. It depends on pyridoxal 5'-phosphate as a cofactor.

It is found in the mitochondrion. This is an uncharacterized protein from Schizosaccharomyces pombe (strain 972 / ATCC 24843) (Fission yeast).